The primary structure comprises 320 residues: tRNA pseudouridine synthase B (320 aa).

D49 serves as the catalytic Nucleophile.

This sequence belongs to the pseudouridine synthase TruB family. Type 1 subfamily.

The enzyme catalyses uridine(55) in tRNA = pseudouridine(55) in tRNA. Responsible for synthesis of pseudouridine from uracil-55 in the psi GC loop of transfer RNAs. This Bartonella tribocorum (strain CIP 105476 / IBS 506) protein is tRNA pseudouridine synthase B.